A 212-amino-acid polypeptide reads, in one-letter code: Ribosome maturation factor RimP (212 aa).

Belongs to the RimP family.

The protein resides in the cytoplasm. Required for maturation of 30S ribosomal subunits. The polypeptide is Ribosome maturation factor RimP (Variovorax paradoxus (strain S110)).